The following is a 183-amino-acid chain: Holliday junction branch migration complex subunit RuvA (183 aa).

Residues 1 to 63 (MIVGLIGVVE…EDANLLYGFL (63 aa)) are domain I. Residues 64-139 (EESEKILFER…FFIQDENRPA (76 aa)) are domain II. Position 139 (alanine 139) is a region of interest, flexible linker. A domain III region spans residues 139–183 (ARNEVFLALESLGFKSAEINKVLKTLKPNLSIEAAIKEALQQLRS).

It belongs to the RuvA family. In terms of assembly, homotetramer. Forms an RuvA(8)-RuvB(12)-Holliday junction (HJ) complex. HJ DNA is sandwiched between 2 RuvA tetramers; dsDNA enters through RuvA and exits via RuvB. An RuvB hexamer assembles on each DNA strand where it exits the tetramer. Each RuvB hexamer is contacted by two RuvA subunits (via domain III) on 2 adjacent RuvB subunits; this complex drives branch migration. In the full resolvosome a probable DNA-RuvA(4)-RuvB(12)-RuvC(2) complex forms which resolves the HJ.

It is found in the cytoplasm. In terms of biological role, the RuvA-RuvB-RuvC complex processes Holliday junction (HJ) DNA during genetic recombination and DNA repair, while the RuvA-RuvB complex plays an important role in the rescue of blocked DNA replication forks via replication fork reversal (RFR). RuvA specifically binds to HJ cruciform DNA, conferring on it an open structure. The RuvB hexamer acts as an ATP-dependent pump, pulling dsDNA into and through the RuvAB complex. HJ branch migration allows RuvC to scan DNA until it finds its consensus sequence, where it cleaves and resolves the cruciform DNA. This Helicobacter pylori (strain HPAG1) protein is Holliday junction branch migration complex subunit RuvA.